Reading from the N-terminus, the 74-residue chain is U3-agatoxin-Ao1b (74 aa).

Positions 1–20 (MKAAISLIIFFAILFVVIEA) are cleaved as a signal peptide. Residues 21–34 (ISYEEGKELFQKER) constitute a propeptide that is removed on maturation. 4 disulfides stabilise this stretch: C37-C53, C44-C58, C52-C68, and C60-C66. At S72 the chain carries Serine amide.

This sequence belongs to the neurotoxin 07 (Beta/delta-agtx) family. 02 (aga-3) subfamily. As to expression, expressed by the venom gland.

It localises to the secreted. Functionally, insecticidal neurotoxin that induces an irreversible spastic paralysis when injected into insects. Modifies presynaptic voltage-gated sodium channels (Nav), causing them to open at the normal resting potential of the nerve. This leads to spontaneous release of neurotransmitter and repetitive action potentials in motor neurons. This is U3-agatoxin-Ao1b from Agelena orientalis (Funnel-web spider).